The following is a 511-amino-acid chain: Thioredoxin reductase 2, mitochondrial (511 aa).

Residues 1 to 21 (MAALRGAAARFRGRAPGGARG) constitute a mitochondrion transit peptide. 29 to 58 (DLLVIGGGSGGLACAKEAAQLGKKVAVLDY) lines the FAD pocket. Cysteines 74 and 79 form a disulfide. The residue at position 316 (lysine 316) is an N6-succinyllysine. The active-site Proton acceptor is the histidine 484. Residues 509–510 (CU) constitute a cross-link (cysteinyl-selenocysteine (Cys-Sec)). Residue selenocysteine 510 is a non-standard amino acid, selenocysteine.

Belongs to the class-I pyridine nucleotide-disulfide oxidoreductase family. As to quaternary structure, homodimer. FAD is required as a cofactor.

The protein localises to the mitochondrion. It carries out the reaction [thioredoxin]-dithiol + NADP(+) = [thioredoxin]-disulfide + NADPH + H(+). Its activity is regulated as follows. Inhibited by 1-chloro-2,4-dinitrobenzene and by zinc, calcium, magnesium and Fe(2+) ions. In terms of biological role, involved in the control of reactive oxygen species levels and the regulation of mitochondrial redox homeostasis. Maintains thioredoxin in a reduced state. May play a role in redox-regulated cell signaling. In Bos taurus (Bovine), this protein is Thioredoxin reductase 2, mitochondrial (TXNRD2).